The following is a 176-amino-acid chain: NAD(P)H-quinone oxidoreductase subunit 6, chloroplastic (176 aa).

The next 5 membrane-spanning stretches (helical) occupy residues 10 to 30, 32 to 52, 61 to 81, 92 to 112, and 152 to 172; these read FLLV…VLLA, PIYS…FYIL, AQLL…VMFI, LWTV…VSLI, and FFIP…GAIA.

It belongs to the complex I subunit 6 family. In terms of assembly, NDH is composed of at least 16 different subunits, 5 of which are encoded in the nucleus.

Its subcellular location is the plastid. The protein localises to the chloroplast thylakoid membrane. The enzyme catalyses a plastoquinone + NADH + (n+1) H(+)(in) = a plastoquinol + NAD(+) + n H(+)(out). It catalyses the reaction a plastoquinone + NADPH + (n+1) H(+)(in) = a plastoquinol + NADP(+) + n H(+)(out). In terms of biological role, NDH shuttles electrons from NAD(P)H:plastoquinone, via FMN and iron-sulfur (Fe-S) centers, to quinones in the photosynthetic chain and possibly in a chloroplast respiratory chain. The immediate electron acceptor for the enzyme in this species is believed to be plastoquinone. Couples the redox reaction to proton translocation, and thus conserves the redox energy in a proton gradient. The protein is NAD(P)H-quinone oxidoreductase subunit 6, chloroplastic (ndhG) of Helianthus annuus (Common sunflower).